The sequence spans 512 residues: Maturase K (512 aa).

The protein belongs to the intron maturase 2 family. MatK subfamily.

It localises to the plastid. Its subcellular location is the chloroplast. Its function is as follows. Usually encoded in the trnK tRNA gene intron. Probably assists in splicing its own and other chloroplast group II introns. The sequence is that of Maturase K from Oenothera argillicola (Appalachian evening primrose).